The primary structure comprises 258 residues: Acetylglutamate kinase (258 aa).

Residues Gly44 to Gly45, Arg66, and Asn158 each bind substrate. Residues Asp181 to Leu186 and Ile209 to Thr211 each bind ATP.

This sequence belongs to the acetylglutamate kinase family. ArgB subfamily. Homodimer.

The protein localises to the cytoplasm. It catalyses the reaction N-acetyl-L-glutamate + ATP = N-acetyl-L-glutamyl 5-phosphate + ADP. It functions in the pathway amino-acid biosynthesis; L-arginine biosynthesis; N(2)-acetyl-L-ornithine from L-glutamate: step 2/4. Catalyzes the ATP-dependent phosphorylation of N-acetyl-L-glutamate. This is Acetylglutamate kinase from Escherichia coli O157:H7.